The chain runs to 196 residues: NAD(P)H-quinone oxidoreductase subunit I (196 aa).

2 consecutive 4Fe-4S ferredoxin-type domains span residues 55–84 (GRIH…VDWE) and 95–124 (KHYS…MTEE). Residues cysteine 64, cysteine 67, cysteine 70, cysteine 74, cysteine 104, cysteine 107, cysteine 110, and cysteine 114 each contribute to the [4Fe-4S] cluster site. The segment at 170–196 (SPHDLPEGSQRSGKRPEEIIEEAEASS) is disordered.

This sequence belongs to the complex I 23 kDa subunit family. NDH-1 is composed of at least 11 different subunits. [4Fe-4S] cluster is required as a cofactor.

The protein localises to the cellular thylakoid membrane. The catalysed reaction is a plastoquinone + NADH + (n+1) H(+)(in) = a plastoquinol + NAD(+) + n H(+)(out). It carries out the reaction a plastoquinone + NADPH + (n+1) H(+)(in) = a plastoquinol + NADP(+) + n H(+)(out). Its function is as follows. NDH-1 shuttles electrons from an unknown electron donor, via FMN and iron-sulfur (Fe-S) centers, to quinones in the respiratory and/or the photosynthetic chain. The immediate electron acceptor for the enzyme in this species is believed to be plastoquinone. Couples the redox reaction to proton translocation, and thus conserves the redox energy in a proton gradient. This is NAD(P)H-quinone oxidoreductase subunit I from Crocosphaera subtropica (strain ATCC 51142 / BH68) (Cyanothece sp. (strain ATCC 51142)).